The following is a 232-amino-acid chain: 5'-methylthioadenosine/S-adenosylhomocysteine nucleosidase (232 aa).

Catalysis depends on Glu12, which acts as the Proton acceptor. Substrate contacts are provided by residues Gly78, Ile152, and 173–174; that span reads ME. Asp197 acts as the Proton donor in catalysis.

The protein belongs to the PNP/UDP phosphorylase family. MtnN subfamily. Homodimer.

The catalysed reaction is S-adenosyl-L-homocysteine + H2O = S-(5-deoxy-D-ribos-5-yl)-L-homocysteine + adenine. The enzyme catalyses S-methyl-5'-thioadenosine + H2O = 5-(methylsulfanyl)-D-ribose + adenine. It carries out the reaction 5'-deoxyadenosine + H2O = 5-deoxy-D-ribose + adenine. Its pathway is amino-acid biosynthesis; L-methionine biosynthesis via salvage pathway; S-methyl-5-thio-alpha-D-ribose 1-phosphate from S-methyl-5'-thioadenosine (hydrolase route): step 1/2. In terms of biological role, catalyzes the irreversible cleavage of the glycosidic bond in both 5'-methylthioadenosine (MTA) and S-adenosylhomocysteine (SAH/AdoHcy) to adenine and the corresponding thioribose, 5'-methylthioribose and S-ribosylhomocysteine, respectively. Also cleaves 5'-deoxyadenosine, a toxic by-product of radical S-adenosylmethionine (SAM) enzymes, into 5-deoxyribose and adenine. Thus, is required for in vivo function of the radical SAM enzymes biotin synthase and lipoic acid synthase, that are inhibited by 5'-deoxyadenosine accumulation. The chain is 5'-methylthioadenosine/S-adenosylhomocysteine nucleosidase from Escherichia fergusonii (strain ATCC 35469 / DSM 13698 / CCUG 18766 / IAM 14443 / JCM 21226 / LMG 7866 / NBRC 102419 / NCTC 12128 / CDC 0568-73).